Here is a 147-residue protein sequence, read N- to C-terminus: UPF0306 protein YhbP (147 aa).

The protein belongs to the UPF0306 family.

This chain is UPF0306 protein YhbP, found in Salmonella choleraesuis (strain SC-B67).